A 480-amino-acid polypeptide reads, in one-letter code: Glycogen synthase (480 aa).

K15 contacts ADP-alpha-D-glucose.

It belongs to the glycosyltransferase 1 family. Bacterial/plant glycogen synthase subfamily.

The catalysed reaction is [(1-&gt;4)-alpha-D-glucosyl](n) + ADP-alpha-D-glucose = [(1-&gt;4)-alpha-D-glucosyl](n+1) + ADP + H(+). It participates in glycan biosynthesis; glycogen biosynthesis. Synthesizes alpha-1,4-glucan chains using ADP-glucose. This Rhizobium leguminosarum bv. trifolii (strain WSM2304) protein is Glycogen synthase.